Consider the following 434-residue polypeptide: Putative MgpC-like protein MPN_149 (434 aa).

Disordered regions lie at residues 168–193 (GSGQ…PKAV) and 215–267 (EPLD…DNNG). The span at 170–184 (GQESSWNSQRSQKVL) shows a compositional bias: polar residues. The segment covering 218–229 (DSTKDGKGKDES) has biased composition (basic and acidic residues). The segment covering 248–267 (STGSQMAAVTDSQQSGDNNG) has biased composition (polar residues).

This sequence belongs to the MgpC family.

The polypeptide is Putative MgpC-like protein MPN_149 (Mycoplasma pneumoniae (strain ATCC 29342 / M129 / Subtype 1) (Mycoplasmoides pneumoniae)).